Reading from the N-terminus, the 233-residue chain is Antiholin-like protein LrgB (233 aa).

A run of 7 helical transmembrane segments spans residues 7–27 (INTP…ATFL), 33–53 (GFFL…FLKL), 63–83 (IGGD…AIPL), 97–117 (ILGG…LIAE), 124–144 (GIIA…PVSA), 152–172 (LTSL…SKLI), and 212–232 (ISLV…ATLL).

The protein belongs to the CidB/LrgB family. LrgB subfamily.

It is found in the cell membrane. In terms of biological role, inhibits the expression or activity of extracellular murein hydrolases by interacting, possibly with LrgA, with the holin-like proteins CidA and/or CidB. The LrgAB and CidAB proteins may affect the proton motive force of the membrane. May be involved in programmed cell death (PCD), possibly triggering PCD in response to antibiotics and environmental stresses. The polypeptide is Antiholin-like protein LrgB (Staphylococcus saprophyticus subsp. saprophyticus (strain ATCC 15305 / DSM 20229 / NCIMB 8711 / NCTC 7292 / S-41)).